We begin with the raw amino-acid sequence, 116 residues long: Large ribosomal subunit protein bL20 (116 aa).

This sequence belongs to the bacterial ribosomal protein bL20 family.

Its function is as follows. Binds directly to 23S ribosomal RNA and is necessary for the in vitro assembly process of the 50S ribosomal subunit. It is not involved in the protein synthesizing functions of that subunit. In Desulfatibacillum aliphaticivorans, this protein is Large ribosomal subunit protein bL20.